The chain runs to 366 residues: Isocitrate dehydrogenase [NAD] subunit alpha, mitochondrial (366 aa).

Residues 1–27 (MAGSAWVSKVSRLLGAFHNTKQVTRGF) constitute a mitochondrion transit peptide. N6-succinyllysine is present on lysine 77. The residue at position 101 (threonine 101) is a Phosphothreonine. Substrate is bound by residues arginine 115, arginine 125, and arginine 146. An N6-acetyllysine modification is found at lysine 223. Residues aspartate 233, aspartate 257, and aspartate 261 each coordinate Mg(2+). Lysine 343 carries the post-translational modification N6-acetyllysine; alternate. Residue lysine 343 is modified to N6-succinyllysine; alternate. Lysine 350 is modified (N6-succinyllysine).

It belongs to the isocitrate and isopropylmalate dehydrogenases family. In terms of assembly, heterooligomer of subunits alpha (IDH3A), beta (IDH3B), and gamma (IDH3G) in the apparent ratio of 2:1:1. The heterodimer containing one IDH3A and one IDH3B subunit and the heterodimer containing one IDH3A and one IDH3G subunit assemble into a heterotetramer (which contains two subunits of IDH3A, one of IDH3B and one of IDH3G) and further into the heterooctamer. Mg(2+) serves as cofactor. Requires Mn(2+) as cofactor. In terms of tissue distribution, expressed in brown adipose tissue (BAT).

The protein localises to the mitochondrion. It carries out the reaction D-threo-isocitrate + NAD(+) = 2-oxoglutarate + CO2 + NADH. With respect to regulation, the heterotetramer and the heterodimer composed of IDH3A and IDH3G subunits can be allosterically activated by citrate (CIT) or/and ADP, and the two activators can act independently or synergistically. The heterodimer composed of IDH3A and IDH3B subunits cannot be allosterically regulated and the allosteric regulation of the heterotetramer is through the IDH3G subunit and not the IDH3B subunit. The IDH3G subunit contains the allosteric site which consists of a CIT-binding site and an ADP-binding site, and the binding of CIT and ADP causes conformational changes at the allosteric site which are transmitted to the active site in the catalytic subunit (IDH3A) through a cascade of conformational changes at the heterodimer interface, leading to stabilization of the isocitrate-binding at the active site and thus activation of the enzyme. ATP can activate the heterotetramer and the heterodimer composed of IDH3A and IDH3G subunits at low concentrations but inhibits their activities at high concentrations, whereas ATP exhibits only inhibitory effect on the heterodimer composed of IDH3A and IDH3B subunits. Its function is as follows. Catalytic subunit of the enzyme which catalyzes the decarboxylation of isocitrate (ICT) into alpha-ketoglutarate. The heterodimer composed of the alpha (IDH3A) and beta (IDH3B) subunits and the heterodimer composed of the alpha (IDH3A) and gamma (IDH3G) subunits, have considerable basal activity but the full activity of the heterotetramer (containing two subunits of IDH3A, one of IDH3B and one of IDH3G) requires the assembly and cooperative function of both heterodimers. This chain is Isocitrate dehydrogenase [NAD] subunit alpha, mitochondrial, found in Rattus norvegicus (Rat).